The primary structure comprises 1275 residues: Streptococcal hemoprotein receptor (1275 aa).

The signal sequence occupies residues methionine 1 to serine 26. The tract at residues glycine 61 to phenylalanine 123 is HID 1. Threonine 87, arginine 196, tyrosine 197, and methionine 238 together coordinate heme. The interval isoleucine 203–valine 269 is HID 2. One can recognise an NEAT 1 domain in the interval leucine 369–lysine 501. LRR repeat units lie at residues leucine 544 to alanine 567, lysine 568 to glutamine 590, lysine 592 to serine 614, alanine 616 to serine 638, leucine 639 to glycine 662, serine 664 to proline 686, leucine 687 to leucine 710, alanine 712 to asparagine 733, leucine 734 to glutamine 757, asparagine 759 to aspartate 781, and glutamate 783 to leucine 804. Positions leucine 976–glutamate 1138 constitute an NEAT 2 domain. 3 disordered regions span residues lysine 1137–threonine 1174, lysine 1186–glutamate 1205, and leucine 1210–serine 1248. Over residues glutamate 1138 to proline 1166 the composition is skewed to polar residues. Composition is skewed to basic and acidic residues over residues serine 1196 to glutamate 1205 and leucine 1210 to lysine 1229. The helical transmembrane segment at tyrosine 1250–glycine 1269 threads the bilayer.

The protein localises to the cell membrane. May modulate heme uptake according to heme availability. In the presence of high heme concentrations, NEAT 1 facilitates fast heme delivery to Shp, whereas NEAT 2 serves as a temporary storage for heme on the bacterial surface. When heme availability is limiting, heme from NEAT 2 is transferred back to NEAT 1 and from there to Shp. Hemoprotein receptor that plays a central role in the acquisition of host heme, a source of iron during bacterial infection, and is therefore an important virulence factor. Captures host hemoproteins and their iron-containing heme molecules, and transfers the heme to the cell surface heme-binding protein Shp. Plays a pivotal role in iron acquisition and growth under iron-starvation conditions. Uses a cap and release mechanism in which Shr forms a dynamic complex with hemoglobin that enables the gated release of its most labile heme molecule. This mechanism exploits the hemoglobin beta subunit's inherent weaker affinity for heme, allowing S.pyogenes to preferentially capture only heme-saturated forms of hemoglobin that contain iron. In vitro, binds directly to a variety of heme-containing proteins, including hemoglobin, myoglobin, heme albumin and the hemoglobin-haptoglobin complex. It also binds to and acquires heme from methemoglobin, the ferric form of hemoglobin, which is likely to be a physiologically relevant heme source for the hemolytic group A streptococcus (GAS). Seems to have an inherent ability to reduce the ferric heme present in methemoglobin to ferrous heme and to provide a stable environment for the produced ferrous complex. Does not bind apohemoglobin, apohaptoglobin, fibrinogen or streptavidin, indicating that it specifically recognizes hemoproteins. In terms of biological role, in addition to its role in heme acquisition, functions as an adhesin, contributing to host cell adhesion and hence virulence. Specifically binds to extracellular matrix (ECM) components, including fibronectin and laminin, and mediates bacterial attachment to host epithelial cells. The chain is Streptococcal hemoprotein receptor from Streptococcus pyogenes serotype M1.